Reading from the N-terminus, the 141-residue chain is Large ribosomal subunit protein uL11 (141 aa).

The protein belongs to the universal ribosomal protein uL11 family. As to quaternary structure, part of the ribosomal stalk of the 50S ribosomal subunit. Interacts with L10 and the large rRNA to form the base of the stalk. L10 forms an elongated spine to which L12 dimers bind in a sequential fashion forming a multimeric L10(L12)X complex. One or more lysine residues are methylated.

Its function is as follows. Forms part of the ribosomal stalk which helps the ribosome interact with GTP-bound translation factors. The chain is Large ribosomal subunit protein uL11 from Prochlorococcus marinus (strain MIT 9515).